A 221-amino-acid chain; its full sequence is PKHD-type hydroxylase PMT_0286 (221 aa).

The Fe2OG dioxygenase domain occupies 80–174 (HIHGVMFSRS…RLVCVGWIQS (95 aa)). Residues His-98, Asp-100, and His-155 each coordinate Fe cation. Arg-165 is a binding site for 2-oxoglutarate.

Fe(2+) serves as cofactor. L-ascorbate is required as a cofactor.

The protein is PKHD-type hydroxylase PMT_0286 of Prochlorococcus marinus (strain MIT 9313).